Consider the following 625-residue polypeptide: RalA-binding protein 1 (625 aa).

2 stretches are compositionally biased toward basic and acidic residues: residues 1-11 and 20-60; these read MDFDSPEEKEF and ADAK…KDRG. Residues 1 to 172 are disordered; sequence MDFDSPEEKE…SKQLSQQQDD (172 aa). A phosphoserine mark is found at serine 68 and serine 69. Positions 94-157 are enriched in basic and acidic residues; the sequence is KSKEKREKSR…EKDKKADKKD (64 aa). In terms of domain architecture, Rho-GAP spans 191 to 385; it reads VSLATERSRC…PLTSTSPKLP (195 aa). A disordered region spans residues 443-500; the sequence is QEKTAEEVDNSSSAPPAVASEDTTDSKPAGTPAVSTNNSISQEEPKTDTLTPKDAPND. A compositionally biased stretch (polar residues) spans 475 to 484; the sequence is AVSTNNSISQ.

Interacts with CycB and numb.

Participates in receptor endocytosis during interphase, is also involved in mitotic processes when endocytosis is switched off. The polypeptide is RalA-binding protein 1 (Drosophila melanogaster (Fruit fly)).